Here is a 367-residue protein sequence, read N- to C-terminus: Peptide chain release factor 2 (367 aa).

Gln-254 bears the N5-methylglutamine mark.

It belongs to the prokaryotic/mitochondrial release factor family. Methylated by PrmC. Methylation increases the termination efficiency of RF2.

Its subcellular location is the cytoplasm. Its function is as follows. Peptide chain release factor 2 directs the termination of translation in response to the peptide chain termination codons UGA and UAA. The protein is Peptide chain release factor 2 of Aromatoleum aromaticum (strain DSM 19018 / LMG 30748 / EbN1) (Azoarcus sp. (strain EbN1)).